The chain runs to 185 residues: Elongation factor P (185 aa).

It belongs to the elongation factor P family.

It localises to the cytoplasm. It participates in protein biosynthesis; polypeptide chain elongation. Involved in peptide bond synthesis. Stimulates efficient translation and peptide-bond synthesis on native or reconstituted 70S ribosomes in vitro. Probably functions indirectly by altering the affinity of the ribosome for aminoacyl-tRNA, thus increasing their reactivity as acceptors for peptidyl transferase. The protein is Elongation factor P of Lactococcus lactis subsp. cremoris (strain MG1363).